The chain runs to 88 residues: Small ribosomal subunit protein uS17 (88 aa).

It belongs to the universal ribosomal protein uS17 family. As to quaternary structure, part of the 30S ribosomal subunit.

Its function is as follows. One of the primary rRNA binding proteins, it binds specifically to the 5'-end of 16S ribosomal RNA. The chain is Small ribosomal subunit protein uS17 from Mycoplasmopsis agalactiae (strain NCTC 10123 / CIP 59.7 / PG2) (Mycoplasma agalactiae).